We begin with the raw amino-acid sequence, 571 residues long: Phosphoribosylaminoimidazole carboxylase (571 aa).

Ser-37 is subject to Phosphoserine. The region spanning 110–298 (KEHLIKNGIA…QFEAHLRSIL (189 aa)) is the ATP-grasp domain. Residue 138 to 193 (GRDLGFPFVLKSRTLAYDGRGNFVVKNKEMIPEALEVLKDRPLYAEKWAPFTKELA) participates in ATP binding.

This sequence in the C-terminal section; belongs to the AIR carboxylase family. Class I subfamily.

The enzyme catalyses 5-amino-1-(5-phospho-D-ribosyl)imidazole-4-carboxylate + H(+) = 5-amino-1-(5-phospho-beta-D-ribosyl)imidazole + CO2. It functions in the pathway purine metabolism; IMP biosynthesis via de novo pathway; 5-amino-1-(5-phospho-D-ribosyl)imidazole-4-carboxylate from 5-amino-1-(5-phospho-D-ribosyl)imidazole (carboxylase route): step 1/1. The sequence is that of Phosphoribosylaminoimidazole carboxylase (ADE2) from Saccharomyces cerevisiae (strain ATCC 204508 / S288c) (Baker's yeast).